A 340-amino-acid chain; its full sequence is 4-hydroxy-2-oxovalerate aldolase (340 aa).

The 253-residue stretch at 8 to 260 (VILHDMSLRD…HHGVNLYDIM (253 aa)) folds into the Pyruvate carboxyltransferase domain. 16–17 (RD) is a binding site for substrate. Residue Asp17 coordinates Mn(2+). His20 acts as the Proton acceptor in catalysis. The substrate site is built by Ser170 and His199. Mn(2+) contacts are provided by His199 and His201. Tyr290 is a substrate binding site.

This sequence belongs to the 4-hydroxy-2-oxovalerate aldolase family.

It carries out the reaction (S)-4-hydroxy-2-oxopentanoate = acetaldehyde + pyruvate. This is 4-hydroxy-2-oxovalerate aldolase from Shewanella halifaxensis (strain HAW-EB4).